The sequence spans 370 residues: tRNA (guanine(9)-/adenine(9)-N1)-methyltransferase (370 aa).

An SAM-dependent MTase TRM10-type domain is found at 87–292; sequence TPEELREKLP…KELPKRATRY (206 aa).

Belongs to the class IV-like SAM-binding methyltransferase superfamily. TRM10 family.

Its subcellular location is the cytoplasm. It catalyses the reaction adenosine(9) in tRNA + S-adenosyl-L-methionine = N(1)-methyladenosine(9) in tRNA + S-adenosyl-L-homocysteine + H(+). The enzyme catalyses guanosine(9) in tRNA + S-adenosyl-L-methionine = N(1)-methylguanosine(9) in tRNA + S-adenosyl-L-homocysteine + H(+). Functionally, catalyzes the S-adenosyl-L-methionine-dependent formation of either N(1)-methyladenine or N(1)-methylguanine at position 9 (m1A9 or m1G9) in tRNA. This chain is tRNA (guanine(9)-/adenine(9)-N1)-methyltransferase, found in Thermococcus kodakarensis (strain ATCC BAA-918 / JCM 12380 / KOD1) (Pyrococcus kodakaraensis (strain KOD1)).